Consider the following 809-residue polypeptide: Protein TRC8 homolog (809 aa).

A run of 11 helical transmembrane segments spans residues 124-144 (TVKFVLCVFAFLSAACIFMLW), 147-167 (HLVMVYMFLTSLGLTFLSYWS), 200-220 (VMSLAPHLMAQWFMGMLFAYI), 233-253 (MPIIFASPILLAMLPLPAKVV), 256-276 (LPVVAVFTPIILTKITLMQSA), 350-370 (LVDGCETMTAVLGMTGVISMF), 392-412 (LGTVSAVLFYILALQTGLTSL), 425-445 (LCLLMTALLHFLHNIVSPILM), 461-481 (ALSVCAFLVVLSVSLLYHLWS), 488-508 (WLLAVTAFSVEVVVKVLVSLA), and 539-559 (SVEFCFGILLFINGAWILIFE). The RING-type; atypical zinc finger occupies 621-659 (CAICYQEMYSAKITRCRHFFHGVCLRKWLYVQDRCPLCH). 2 disordered regions span residues 696–724 (NNAAAQRRSPERAPVEASEQAPATSSSSA) and 752–788 (VASSSSATHRISASGSSDSSYMTASAQSPPPTATSAA). Residues 711-724 (EASEQAPATSSSSA) are compositionally biased toward low complexity.

As to quaternary structure, interacts with VHL. Interacts with the MPN domain of CSN5. Interacts with EIF3F and EIF3H.

The protein localises to the endoplasmic reticulum membrane. Functionally, plays a role in growth inhibition that is dependent upon COP9 signalosome subunits CSN5 and CSN6. May modulate signalosome levels or compartmentalization. Probably functions in the same or a related pathway to VHL during early midline development. This is Protein TRC8 homolog from Drosophila melanogaster (Fruit fly).